The following is a 307-amino-acid chain: Elongation factor Ts (307 aa).

Positions 80 to 83 (TDFV) are involved in Mg(2+) ion dislocation from EF-Tu.

It belongs to the EF-Ts family.

It localises to the cytoplasm. Associates with the EF-Tu.GDP complex and induces the exchange of GDP to GTP. It remains bound to the aminoacyl-tRNA.EF-Tu.GTP complex up to the GTP hydrolysis stage on the ribosome. The sequence is that of Elongation factor Ts from Albidiferax ferrireducens (strain ATCC BAA-621 / DSM 15236 / T118) (Rhodoferax ferrireducens).